Consider the following 70-residue polypeptide: Small ribosomal subunit protein bS21B (70 aa).

The protein belongs to the bacterial ribosomal protein bS21 family.

The protein is Small ribosomal subunit protein bS21B (rpsU2) of Rhizobium meliloti (strain 1021) (Ensifer meliloti).